Consider the following 323-residue polypeptide: MSHAHPENWPVLIIAGALDTELLRDVKTLAAAAGESDGNPPFSEQTLVTLRGADAGDHSVLSFVLYAPDEDSDPATAEDLAGVAVVVENGDESGVLELAVHPSYRNQGVAGRLLDALQGKRGLGGLSAWSHGNHEAAAELATRFGYGPVRELWKMRLMSSTSALPDAGLPDGVSLRAFVPGQDEQAWLTANSAAFSHHPEQGSMTRADLEARKAEDWFDPEGFLLAVNAEGELLGFHWTKVHPRQGPHPAIGEVYVVGVTPEAQGLGLGKALTVAGIKHLQDQGLHAVMLYVDADNEAAVALYQKLGFVRWDTDVMYGPLTKN.

N-acetyltransferase domains follow at residues 21–176 and 173–323; these read ELLR…VSLR and VSLR…LTKN. Glu44 provides a ligand contact to 1D-myo-inositol 2-(L-cysteinylamino)-2-deoxy-alpha-D-glucopyranoside. Position 98-100 (98-100) interacts with acetyl-CoA; it reads LAV. 1D-myo-inositol 2-(L-cysteinylamino)-2-deoxy-alpha-D-glucopyranoside is bound by residues Glu200, Lys240, and Glu253. Acetyl-CoA is bound by residues 257-259 and 264-270; these read VGV and QGLGLGK. Tyr291 lines the 1D-myo-inositol 2-(L-cysteinylamino)-2-deoxy-alpha-D-glucopyranoside pocket.

It belongs to the acetyltransferase family. MshD subfamily. Monomer.

The catalysed reaction is 1D-myo-inositol 2-(L-cysteinylamino)-2-deoxy-alpha-D-glucopyranoside + acetyl-CoA = mycothiol + CoA + H(+). In terms of biological role, catalyzes the transfer of acetyl from acetyl-CoA to desacetylmycothiol (Cys-GlcN-Ins) to form mycothiol. This Paenarthrobacter aurescens (strain TC1) protein is Mycothiol acetyltransferase.